A 333-amino-acid chain; its full sequence is Cap-specific mRNA (nucleoside-2'-O-)-methyltransferase (333 aa).

Tyrosine 22 provides a ligand contact to mRNA. S-adenosyl-L-methionine is bound by residues glutamine 39, tyrosine 66, glycine 68, glycine 72, aspartate 95, arginine 97, valine 116, and aspartate 138. Positions 169 to 249 (PVASSLKWRC…NKIVRNKVVV (81 aa)) are binding to NPH-I. The segment at 169 to 333 (PVASSLKWRC…NSKRSVRGNK (165 aa)) is binding to Rap94. The active-site For methyltransferase activity is lysine 175. MRNA contacts are provided by residues 177–180 (RCPF), aspartate 182, 205–207 (SAE), and glutamate 233.

Belongs to the class I-like SAM-binding methyltransferase superfamily. Poxvirus/kinetoplastid 2'-O-MTase family. In terms of assembly, interacts with poly(A) polymerase catalytic subunit OPG063. Interacts with OPG109 and OPG123; these interactions might help linking transcription to capping and polyadenylation.

Its subcellular location is the virion. It catalyses the reaction a 5'-end (N(7)-methyl 5'-triphosphoguanosine)-ribonucleoside in mRNA + S-adenosyl-L-methionine = a 5'-end (N(7)-methyl 5'-triphosphoguanosine)-(2'-O-methyl-ribonucleoside) in mRNA + S-adenosyl-L-homocysteine + H(+). Functionally, displays methyltransferase, positive regulation of the poly(A) polymerase and transcription elongation activities. Involved in the modification of both mRNA ends and in intermediate and late gene positive transcription elongation. At the mRNAs 5' end, methylates the ribose 2' OH group of the first transcribed nucleotide, thereby producing a 2'-O-methylpurine cap. At the 3' end, functions as a processivity factor which stimulates the activity of the viral poly(A) polymerase OPG063 that creates mRNA's poly(A) tail. In the presence of OPG102, OPG063 does not dissociate from the RNA allowing tail elongation to around 250 adenylates. The chain is Cap-specific mRNA (nucleoside-2'-O-)-methyltransferase (OPG102) from Homo sapiens (Human).